The primary structure comprises 862 residues: Taxadiene synthase (862 aa).

The interval 45 to 66 is disordered; it reads RVKMSRGSGGPGPVVMMSSSTG. Mg(2+) is bound by residues Asp613, Asp617, Asn757, Thr761, and Glu765. The DDXXD motif signature appears at 613–617; it reads DDMAD.

Belongs to the terpene synthase family. Requires Mg(2+) as cofactor.

The enzyme catalyses (2E,6E,10E)-geranylgeranyl diphosphate = taxa-4(5),11(12)-diene + diphosphate. It participates in alkaloid biosynthesis; taxol biosynthesis; taxa-4(20),11-dien-5alpha-ol from geranylgeranyl diphosphate: step 1/2. Catalyzes the cyclization of the ubiquitous isoprenoid intermediate geranylgeranyl diphosphate to taxa-4,11-diene, the parent olefin with a taxane skeleton. This Taxus chinensis (Chinese yew) protein is Taxadiene synthase (TDC1).